We begin with the raw amino-acid sequence, 772 residues long: Acyl-homoserine lactone acylase PvdQ (772 aa).

Residues 1 to 28 (MPVFPFCRPMTCAGLAAALVAFSVGVQA) form the signal peptide. Positions 199 to 220 (AQSSAGFASALARQERFAAERG) are cleaved as a propeptide — spacer peptide. Catalysis depends on Ser-221, which acts as the Nucleophile.

It belongs to the peptidase S45 family. As to quaternary structure, heterodimer of an alpha subunit and a beta subunit processed from the same precursor.

It localises to the periplasm. The catalysed reaction is an N-acyl-L-homoserine lactone + H2O = L-homoserine lactone + a carboxylate. In terms of biological role, catalyzes the deacylation of acyl-homoserine lactone (AHL or acyl-HSL), releasing homoserine lactone (HSL) and the corresponding fatty acid. Possesses a specificity for the degradation of long-chain acyl-HSLs (side chains of 11 to 14 carbons in length). The sequence is that of Acyl-homoserine lactone acylase PvdQ (pvdQ) from Pseudomonas putida (strain ATCC 47054 / DSM 6125 / CFBP 8728 / NCIMB 11950 / KT2440).